The sequence spans 560 residues: Dimethylaniline monooxygenase [N-oxide-forming] 4 (560 aa).

FAD is bound by residues 9–13 (GAGVS), Glu32, and 40–41 (LW). Residues 60–61 (TN) and 195–198 (TGGD) contribute to the NADP(+) site. A helical transmembrane segment spans residues 519–539 (APVLIVSLLLIYKSSLFLELV).

Belongs to the FMO family. FAD is required as a cofactor. As to expression, detected in liver and kidney (at protein level).

It localises to the microsome membrane. The protein resides in the endoplasmic reticulum membrane. It carries out the reaction N,N-dimethylaniline + NADPH + O2 + H(+) = N,N-dimethylaniline N-oxide + NADP(+) + H2O. This protein is involved in the oxidative metabolism of a variety of xenobiotics such as drugs and pesticides. The protein is Dimethylaniline monooxygenase [N-oxide-forming] 4 (Fmo4) of Rattus norvegicus (Rat).